Consider the following 887-residue polypeptide: Degenerin-like protein unc-105 (887 aa).

The interval 1–33 (MAEDRIKSKLRRPASIESTMSSRTKPRHKPSPM) is disordered. At 1-93 (MAEDRIKSKL…AATADGKWRW (93 aa)) the chain is on the cytoplasmic side. Residues 94–114 (FWYTAFTICLLALLIQIFFLI) form a helical membrane-spanning segment. The Extracellular segment spans residues 115-698 (SKYRQYGKTV…SVLADLGGLT (584 aa)). 5 N-linked (GlcNAc...) asparagine glycosylation sites follow: Asn244, Asn450, Asn473, Asn581, and Asn599. Residues 699–719 (GLWIGASVVSLLEIVTLIVFA) form a helical membrane-spanning segment. The Cytoplasmic portion of the chain corresponds to 720-887 (TQAYVRKRKG…YSAPYEHRKK (168 aa)). 2 disordered regions span residues 794 to 815 (AIQEQSDDEEETTESSRTNGSC) and 859 to 887 (SNSEEEDAEDEVHREPEPFYSAPYEHRKK).

Belongs to the amiloride-sensitive sodium channel (TC 1.A.6) family. Expressed in body wall muscle.

The protein resides in the membrane. Ion channel which is permeable to small monovalent cations. Shown not to be H+-ion gated. May be mechanosensitive and is required for growth and muscle development. The polypeptide is Degenerin-like protein unc-105 (unc-105) (Caenorhabditis elegans).